A 492-amino-acid polypeptide reads, in one-letter code: Catalase isozyme 3 (492 aa).

Active-site residues include His65 and Asn138. Tyr348 provides a ligand contact to heme.

The protein belongs to the catalase family. In terms of assembly, homotetramer. Heme is required as a cofactor.

It localises to the peroxisome. It carries out the reaction 2 H2O2 = O2 + 2 H2O. In terms of biological role, occurs in almost all aerobically respiring organisms and serves to protect cells from the toxic effects of hydrogen peroxide. In Nicotiana plumbaginifolia (Leadwort-leaved tobacco), this protein is Catalase isozyme 3 (CAT3).